The sequence spans 232 residues: Large ribosomal subunit protein uL1 (232 aa).

Belongs to the universal ribosomal protein uL1 family. Part of the 50S ribosomal subunit.

Functionally, binds directly to 23S rRNA. The L1 stalk is quite mobile in the ribosome, and is involved in E site tRNA release. Protein L1 is also a translational repressor protein, it controls the translation of the L11 operon by binding to its mRNA. The polypeptide is Large ribosomal subunit protein uL1 (Burkholderia vietnamiensis (strain G4 / LMG 22486) (Burkholderia cepacia (strain R1808))).